A 225-amino-acid polypeptide reads, in one-letter code: MKVPVLIINMKAYPELLGGGAVKLAQVAEKVANNLGASIIVAPPHTYLRQVAESVNIPVYAQSADPVDPGARTGHIPLEFIKDAGASGVIINHSEHRLLLNDIAMLVNKAKALNLETVVCSPDPLSSAAAAALAPTAVAMEPPELIGTGKSVSRTKPDVVVETVNAVKRVNGDVKVITGAGIEDYNDVAKAIELGTVGVLVASAIVKAKDWEAKITELAKPLVGK.

9–11 (NMK) lines the substrate pocket. The Electrophile role is filled by H93. E141 serves as the catalytic Proton acceptor. Substrate contacts are provided by residues I146, G181, and 202 to 203 (AS).

It belongs to the triosephosphate isomerase family. Homotetramer; dimer of dimers.

The protein localises to the cytoplasm. It carries out the reaction D-glyceraldehyde 3-phosphate = dihydroxyacetone phosphate. It functions in the pathway carbohydrate biosynthesis; gluconeogenesis. The protein operates within carbohydrate degradation; glycolysis; D-glyceraldehyde 3-phosphate from glycerone phosphate: step 1/1. Involved in the gluconeogenesis. Catalyzes stereospecifically the conversion of dihydroxyacetone phosphate (DHAP) to D-glyceraldehyde-3-phosphate (G3P). This Caldivirga maquilingensis (strain ATCC 700844 / DSM 13496 / JCM 10307 / IC-167) protein is Triosephosphate isomerase.